A 306-amino-acid polypeptide reads, in one-letter code: NAD kinase 1 (306 aa).

The active-site Proton acceptor is the D67. NAD(+) is bound by residues 67 to 68, 149 to 150, D181, and 192 to 197; these read DG, NE, and TGYTVS.

Belongs to the NAD kinase family. A divalent metal cation is required as a cofactor.

Its subcellular location is the cytoplasm. It carries out the reaction NAD(+) + ATP = ADP + NADP(+) + H(+). In terms of biological role, involved in the regulation of the intracellular balance of NAD and NADP, and is a key enzyme in the biosynthesis of NADP. Catalyzes specifically the phosphorylation on 2'-hydroxyl of the adenosine moiety of NAD to yield NADP. This Trichormus variabilis (strain ATCC 29413 / PCC 7937) (Anabaena variabilis) protein is NAD kinase 1.